We begin with the raw amino-acid sequence, 193 residues long: Protein PATRONUS 1 (193 aa).

A DEN-box motif is present at residues 14-16 (DEN). Residues 46–49 (RKAL) carry the D-box motif.

Interacts directly with the anaphase promoting complex/cyclosome (APC/C) through the CDC27B and CDC20-1 subunits. In terms of tissue distribution, expressed in somatic and reproductive tissues. Expressed in inflorescence, young buds, roots and basal portion of young leaves. Expressed in proliferating cells such as apical meristems of roots and shoots, expanding cotyledons and leaves, root vascular tissues, and in stomatal precursor cells.

The protein localises to the nucleus. The protein resides in the cytoplasm. In terms of biological role, required for the maintenance of centromeric cohesion during interkinesis, until meiosis II. Required for regular configuration and segregation of sister chromatids in meiosis II. Also required for centromere cohesion during meiosis I. Involved in spindle organization at the end of telophase I and in meiosis II. Required to prevent precocious release of pericentromeric cohesins during meiosis, but not for cohesion establishment and monopolar orientation of kinetochores at meiosis I. Involved also in somatic development. Regulates mitotic cell division and ploidy stability in somatic cell types. May be involved in the organization of microtubules dynamics. Involved in abiotic stresses and mono- or divalent ions tolerance and may play a role in maintaining meristematic activity under saline conditions. PANS1 and GIG1 are part of a network linking centromere cohesion and cell cycle progression through control of APC/C activity. Regulates the number of dividing cells in root meristem and is necessary for the anaphase onset control through an APC/C-mediated pathway. Involved in maintaining correct chromosome arm cohesion under stress conditions. This is Protein PATRONUS 1 from Arabidopsis thaliana (Mouse-ear cress).